A 440-amino-acid polypeptide reads, in one-letter code: Proline--tRNA ligase (440 aa).

It belongs to the class-II aminoacyl-tRNA synthetase family. ProS type 2 subfamily. Homodimer.

It is found in the cytoplasm. It catalyses the reaction tRNA(Pro) + L-proline + ATP = L-prolyl-tRNA(Pro) + AMP + diphosphate. In terms of biological role, catalyzes the attachment of proline to tRNA(Pro) in a two-step reaction: proline is first activated by ATP to form Pro-AMP and then transferred to the acceptor end of tRNA(Pro). This Xanthobacter autotrophicus (strain ATCC BAA-1158 / Py2) protein is Proline--tRNA ligase.